The chain runs to 268 residues: Urease accessory protein UreD (268 aa).

The protein belongs to the UreD family. As to quaternary structure, ureD, UreF and UreG form a complex that acts as a GTP-hydrolysis-dependent molecular chaperone, activating the urease apoprotein by helping to assemble the nickel containing metallocenter of UreC. The UreE protein probably delivers the nickel.

It localises to the cytoplasm. Functionally, required for maturation of urease via the functional incorporation of the urease nickel metallocenter. This Lysinibacillus sphaericus (strain C3-41) protein is Urease accessory protein UreD.